Here is a 293-residue protein sequence, read N- to C-terminus: Actin-related protein 2/3 complex subunit 2 (293 aa).

It belongs to the ARPC2 family. In terms of assembly, component of the Arp2/3 complex composed of arpB/Arp2, arpC/Arp3, arcA/p41-arc, arcB/p34-arc, arcC/p21-arc, arcD/p20-arc and arcE/p16-arc. Interacts with carmil (via the region between the LRR domain and COOH-terminal proline-rich domain); carmil is required for Arp2/3-dependent actin nucleation. Arp2/3 complex, MyoB, MyoC, and the alpha and beta subunits of capping protein all form a larger complex with carmil.

It is found in the cytoplasm. The protein localises to the cytoskeleton. Its subcellular location is the cell projection. The protein resides in the cytosol. It localises to the cell cortex. It is found in the pseudopodium. In terms of biological role, functions as a component of the Arp2/3 complex which is involved in regulation of actin polymerization and together with an activating nucleation-promoting factor (NPF) mediates the formation of branched actin networks. Seems to contact the pointed end of the daughter actin filament. The Arp2/3 complex is involved in organizing the actin system in cell motility and chemotaxis, in phagocytosis and macropinocytosis, at late steps of endosome processing, and in mitosis. In concert with a group of other proteins, the Arp2/3 complex plays a general role in the rapid activation and adaptation of the actin system to its multiple functions. The polypeptide is Actin-related protein 2/3 complex subunit 2 (arcB) (Dictyostelium discoideum (Social amoeba)).